A 250-amino-acid polypeptide reads, in one-letter code: Tumor necrosis factor ligand superfamily member 13 (250 aa).

A propeptide spanning residues 1–104 is cleaved from the precursor; that stretch reads MPASSPFLLA…ENGERSRKRR (104 aa). Disordered regions lie at residues 61–82 and 89–108; these read EVSR…PWQS and DALE…AVLT. The region spanning 116–250 is the THD domain; sequence SVLHLVPINA…HGTFLGFVKL (135 aa). An N-linked (GlcNAc...) asparagine glycan is attached at N124. C196 and C211 are joined by a disulfide.

Belongs to the tumor necrosis factor family. As to quaternary structure, homotrimer. The precursor is cleaved by furin. As to expression, expressed at high levels in transformed cell lines, cancers of colon, thyroid, lymphoid tissues and specifically expressed in monocytes and macrophages.

It localises to the secreted. Cytokine that binds to TNFRSF13B/TACI and to TNFRSF17/BCMA. Plays a role in the regulation of tumor cell growth. May be involved in monocyte/macrophage-mediated immunological processes. The protein is Tumor necrosis factor ligand superfamily member 13 (TNFSF13) of Homo sapiens (Human).